A 116-amino-acid polypeptide reads, in one-letter code: MVPGELLVDDGEHPLIPCRRTVTLVVRNSADRPIQVGSHYHFAETNGALDFDRAAARGMRLNITSGTAVRFEPGQQRTVELVDFAGSRTVYGFRGDIQGPLDAGTAETAPGLPQQP.

Residues 97 to 116 (IQGPLDAGTAETAPGLPQQP) are disordered.

The protein belongs to the urease beta subunit family. As to quaternary structure, heterotrimer of UreA (gamma), UreB (beta) and UreC (alpha) subunits. Three heterotrimers associate to form the active enzyme.

Its subcellular location is the cytoplasm. It catalyses the reaction urea + 2 H2O + H(+) = hydrogencarbonate + 2 NH4(+). The protein operates within nitrogen metabolism; urea degradation; CO(2) and NH(3) from urea (urease route): step 1/1. This is Urease subunit beta from Paracidovorax citrulli (strain AAC00-1) (Acidovorax citrulli).